The chain runs to 347 residues: Protein RecA (347 aa).

Residue 65-72 (GPESSGKT) coordinates ATP. Positions 327 to 336 (KFEPTELSRE) are enriched in basic and acidic residues. Positions 327 to 347 (KFEPTELSREEGDEDTLEDTM) are disordered. The segment covering 337-347 (EGDEDTLEDTM) has biased composition (acidic residues).

It belongs to the RecA family.

Its subcellular location is the cytoplasm. In terms of biological role, can catalyze the hydrolysis of ATP in the presence of single-stranded DNA, the ATP-dependent uptake of single-stranded DNA by duplex DNA, and the ATP-dependent hybridization of homologous single-stranded DNAs. It interacts with LexA causing its activation and leading to its autocatalytic cleavage. This is Protein RecA from Xylella fastidiosa (strain 9a5c).